The chain runs to 101 residues: Small ribosomal subunit protein bS18c (101 aa).

The protein belongs to the bacterial ribosomal protein bS18 family. As to quaternary structure, part of the 30S ribosomal subunit.

Its subcellular location is the plastid. The protein resides in the chloroplast. The protein is Small ribosomal subunit protein bS18c of Gossypium barbadense (Sea Island cotton).